The following is a 228-amino-acid chain: Gliolectin (228 aa).

Residues 1–120 (MLCPPMALGP…NPKAVSQAPR (120 aa)) lie on the Cytoplasmic side of the membrane. Residues 121–137 (GMALTPAQISASAKLIL) traverse the membrane as a helical; Signal-anchor for type II membrane protein segment. Over 138–228 (QKCPESDRKK…GTSELADQKQ (91 aa)) the chain is Extracellular. Positions 141–228 (PESDRKKSNG…GTSELADQKQ (88 aa)) are disordered. Residues asparagine 149, asparagine 156, asparagine 198, asparagine 199, asparagine 205, and asparagine 218 are each glycosylated (N-linked (GlcNAc...) asparagine). Residues 195 to 213 (NNNNNSSSSNNNSNMNINN) are compositionally biased toward low complexity. The segment covering 218 to 228 (NGTSELADQKQ) has biased composition (polar residues).

As to expression, expressed by a subset of glial cells found at the midline of the embryo stage 12 nervous system. Expression is highest during the formation of the embryonic axonal commissures, a process requiring midline glial cell function (at protein level).

Its subcellular location is the membrane. Its function is as follows. Has a role in intercellular carbohydrate-mediated cell adhesion. This is Gliolectin from Drosophila melanogaster (Fruit fly).